A 116-amino-acid chain; its full sequence is Large ribosomal subunit protein bL20 (116 aa).

It belongs to the bacterial ribosomal protein bL20 family.

Its function is as follows. Binds directly to 23S ribosomal RNA and is necessary for the in vitro assembly process of the 50S ribosomal subunit. It is not involved in the protein synthesizing functions of that subunit. This Helicobacter pylori (strain P12) protein is Large ribosomal subunit protein bL20.